The chain runs to 357 residues: MLIFFNKYLHINLNILSYIPYRAIFSLLTSFFINLYIGPYFIYYFKKLQKYQIIRNNGPKTHYSKKNTPTMGGIFIIFSILFSTILYCNLSNIYIWYVISILIGYGLIGFIDDYKKIKYKNSQGLKLKWKYFFLSIIAFIFICMIKINNKDIISTELIIPFCIKNDFEINYLYVFLSYFVLVGTSNAVNLTDGLDGLAIMPVIFLTCGLTLISLFSDNINISHYLHVHYVKNSTELAILCMAIVGSGLGFLWFNSYPAKVFMGDVGSLALGGSLGAIAILLHQELLLIIMGGIFVFETISVILQIISFKIRKKRIFQMAPVHHHYEVKGILEPLIIVRFWIVSLILLLISLISLKVC.

The next 10 helical transmembrane spans lie at 23–43, 70–90, 91–111, 127–147, 171–191, 196–216, 236–256, 260–280, 286–306, and 334–354; these read AIFS…YFIY, TMGG…YCNL, SNIY…IGFI, LKWK…MIKI, YLYV…VNLT, GLAI…SLFS, LAIL…FNSY, VFMG…IAIL, LLII…LQII, and LIIV…LISL.

The protein belongs to the glycosyltransferase 4 family. MraY subfamily. The cofactor is Mg(2+).

It localises to the cell inner membrane. The enzyme catalyses UDP-N-acetyl-alpha-D-muramoyl-L-alanyl-gamma-D-glutamyl-meso-2,6-diaminopimeloyl-D-alanyl-D-alanine + di-trans,octa-cis-undecaprenyl phosphate = di-trans,octa-cis-undecaprenyl diphospho-N-acetyl-alpha-D-muramoyl-L-alanyl-D-glutamyl-meso-2,6-diaminopimeloyl-D-alanyl-D-alanine + UMP. It functions in the pathway cell wall biogenesis; peptidoglycan biosynthesis. In terms of biological role, catalyzes the initial step of the lipid cycle reactions in the biosynthesis of the cell wall peptidoglycan: transfers peptidoglycan precursor phospho-MurNAc-pentapeptide from UDP-MurNAc-pentapeptide onto the lipid carrier undecaprenyl phosphate, yielding undecaprenyl-pyrophosphoryl-MurNAc-pentapeptide, known as lipid I. The polypeptide is Phospho-N-acetylmuramoyl-pentapeptide-transferase (Buchnera aphidicola subsp. Acyrthosiphon pisum (strain Tuc7)).